A 249-amino-acid chain; its full sequence is MILELDCGNSFIKWRVIHVADAVIEGGGIVDSDQALVAEVAALASVRLTGCRIVSVRSEEETDALCALIAQAFAVQARVAHPVREMAGVRNGYDDYQRLGMDRWLAALGAFHLAKGACLVIDLGTAAKADFVSADGEHLGGYICPGMPLMRSQLRTHTRRIRYDDASAERALNSLSPGRSTVEAVERGCVLMLQGFAYTQLEQARVLWGEEFTVFLTGGDAPLVREALPQARVVPDLVFVGLAMACPLD.

6 to 13 (DCGNSFIK) serves as a coordination point for ATP. Residues tyrosine 93 and 100 to 103 (GMDR) each bind substrate. Catalysis depends on aspartate 102, which acts as the Proton acceptor. Aspartate 122 is a binding site for K(+). Residue threonine 125 coordinates ATP. Threonine 181 lines the substrate pocket.

This sequence belongs to the type III pantothenate kinase family. Homodimer. The cofactor is NH4(+). It depends on K(+) as a cofactor.

Its subcellular location is the cytoplasm. The enzyme catalyses (R)-pantothenate + ATP = (R)-4'-phosphopantothenate + ADP + H(+). Its pathway is cofactor biosynthesis; coenzyme A biosynthesis; CoA from (R)-pantothenate: step 1/5. In terms of biological role, catalyzes the phosphorylation of pantothenate (Pan), the first step in CoA biosynthesis. The protein is Type III pantothenate kinase of Pseudomonas putida (strain ATCC 700007 / DSM 6899 / JCM 31910 / BCRC 17059 / LMG 24140 / F1).